We begin with the raw amino-acid sequence, 75 residues long: UPF0270 protein PP_1747 (75 aa).

Belongs to the UPF0270 family.

The sequence is that of UPF0270 protein PP_1747 from Pseudomonas putida (strain ATCC 47054 / DSM 6125 / CFBP 8728 / NCIMB 11950 / KT2440).